The chain runs to 74 residues: Large ribosomal subunit protein bL31 (74 aa).

4 residues coordinate Zn(2+): Cys-16, Cys-18, Cys-37, and Cys-40.

Belongs to the bacterial ribosomal protein bL31 family. Type A subfamily. Part of the 50S ribosomal subunit. Requires Zn(2+) as cofactor.

Binds the 23S rRNA. The sequence is that of Large ribosomal subunit protein bL31 from Nitrosomonas europaea (strain ATCC 19718 / CIP 103999 / KCTC 2705 / NBRC 14298).